Here is a 508-residue protein sequence, read N- to C-terminus: Lysine--tRNA ligase (508 aa).

Mg(2+)-binding residues include glutamate 418 and glutamate 425.

Belongs to the class-II aminoacyl-tRNA synthetase family. Homodimer. Mg(2+) is required as a cofactor.

The protein resides in the cytoplasm. It catalyses the reaction tRNA(Lys) + L-lysine + ATP = L-lysyl-tRNA(Lys) + AMP + diphosphate. The chain is Lysine--tRNA ligase from Burkholderia mallei (strain NCTC 10247).